A 670-amino-acid polypeptide reads, in one-letter code: Solute carrier organic anion transporter family member 1A2 (670 aa).

The Cytoplasmic portion of the chain corresponds to 1-20; the sequence is MGETEKRIETHRIRCLSKLK. The chain crosses the membrane as a helical span at residues 21–40; sequence MFLLAITCAFVSKTLSGSYM. The Extracellular segment spans residues 41–59; sequence NSMLTQIERQFNIPTSLVG. A helical transmembrane segment spans residues 60–80; it reads FINGSFEIGNLLLIIFVSYFG. Residues 81–86 are Cytoplasmic-facing; that stretch reads TKLHRP. Residues 87–111 form a helical membrane-spanning segment; that stretch reads IMIGIGCVVMGLGCFLKSLPHFLMN. The Extracellular segment spans residues 112–155; that stretch reads QYEYESTVSVSGNLSSNSFLCMENGTQILRPTQDPSECTKEVKS. N-linked (GlcNAc...) asparagine glycosylation is found at Asn-124 and Asn-135. A helical transmembrane segment spans residues 156-184; the sequence is LMWVYVLVGNIVRGMGETPILPLGISYIE. Residues 185 to 203 lie on the Cytoplasmic side of the membrane; sequence DFAKFENSPLYIGLVETGA. The helical transmembrane segment at 204 to 224 threads the bilayer; that stretch reads IIGPLIGLLLASFCANVYVDT. The Extracellular segment spans residues 225–242; it reads GFVNTDDLIITPTDTRWV. Residues 243–267 form a helical membrane-spanning segment; sequence GAWWFGFLICAGVNVLTAIPFFFLP. Over 268-311 the chain is Cytoplasmic; it reads NTLPKEGLETNADIIKNENEDKQKEEVKKEKYGITKDFLPFMKS. A helical membrane pass occupies residues 312–333; the sequence is LSCNPIYMLFILVSVIQFNAFV. The Extracellular segment spans residues 334–353; that stretch reads NMISFMPKYLEQQYGISSSD. The helical transmembrane segment at 354–377 threads the bilayer; that stretch reads AIFLMGIYNLPPICIGYIIGGLIM. The Cytoplasmic portion of the chain corresponds to 378 to 381; it reads KKFK. Residues 382-405 form a helical membrane-spanning segment; it reads ITVKQAAHIGCWLSLLEYLLYFLS. Over 406-513 the chain is Extracellular; that stretch reads FLMTCENSSV…PDCSLMLQYF (108 aa). N-linked (GlcNAc...) asparagine glycans are attached at residues Asn-412 and Asn-419. The Kazal-like domain maps to 433 to 488; the sequence is NDIFADCNVDCNCPSKIWDPVCGNNGLSYLSACLAGCETSIGTGINMVFQNCSCIQ. 3 disulfides stabilise this stretch: Cys-439–Cys-469, Cys-445–Cys-465, and Cys-454–Cys-486. A helical transmembrane segment spans residues 514–536; the sequence is LILSAMSSFIYSLAAIPGYMVLL. Topologically, residues 537–545 are cytoplasmic; that stretch reads RCMKSEEKS. A helical membrane pass occupies residues 546 to 571; sequence LGVGLHTFCTRVFAGIPAPIYFGALM. The Extracellular segment spans residues 572–605; sequence DSTCLHWGTLKCGESGACRIYDSTTFRYIYLGLP. A helical membrane pass occupies residues 606-623; that stretch reads AALRGSSFVPALIILILL. Residues 624 to 670 lie on the Cytoplasmic side of the membrane; that stretch reads RKCHLPGENASSGTELIETKVKGKENECKDIYQKSTVLKDDELKTKL.

This sequence belongs to the organo anion transporter (TC 2.A.60) family. As to expression, higher expression in the brain than in liver and kidney. Expressed in brain neurons in both cortex and hippocampus. Expressed in placental trophoblasts. Also expressed in lung and testes at lower levels. Expressed in the eye (at protein level). Expressed in the retina in the outer and inner nuclear layers, the inner plexiform layer and the ganglion cell layer. Expressed in liver and prostate. In testis, primarily localized to the basal membrane of Sertoli cells and weakly expressed in Leydig cells and within the tubules. Expressed in fetal brain and liver.

The protein localises to the cell membrane. The protein resides in the basal cell membrane. It catalyses the reaction taurocholate(out) = taurocholate(in). The catalysed reaction is glycocholate(out) = glycocholate(in). It carries out the reaction taurochenodeoxycholate(out) = taurochenodeoxycholate(in). The enzyme catalyses tauroursodeoxycholate(out) = tauroursodeoxycholate(in). It catalyses the reaction dehydroepiandrosterone 3-sulfate(out) = dehydroepiandrosterone 3-sulfate(in). The catalysed reaction is estrone 3-sulfate(out) = estrone 3-sulfate(in). It carries out the reaction 3,3',5'-triiodo-L-thyronine(out) = 3,3',5'-triiodo-L-thyronine(in). The enzyme catalyses L-thyroxine(out) = L-thyroxine(in). It catalyses the reaction taurodeoxycholate(out) = taurodeoxycholate(in). The catalysed reaction is glycodeoxycholate(out) = glycodeoxycholate(in). It carries out the reaction glycochenodeoxycholate(out) = glycochenodeoxycholate(in). The enzyme catalyses glycoursodeoxycholate(out) = glycoursodeoxycholate(in). It catalyses the reaction 17beta-estradiol 17-O-(beta-D-glucuronate)(out) = 17beta-estradiol 17-O-(beta-D-glucuronate)(in). The catalysed reaction is prostaglandin E2(out) = prostaglandin E2(in). It carries out the reaction substance P(out) = substance P(in). Transport activity is inhibited by the grapefruit juice component naringin. In terms of biological role, na(+)-independent transporter that mediates the cellular uptake of a broad range of organic anions such as the endogenous bile salts cholate and deoxycholate, either in their unconjugated or conjugated forms (taurocholate and glycocholate), at the plasmam membrane. Responsible for intestinal absorption of bile acids. Transports dehydroepiandrosterone 3-sulfate (DHEAS), a major circulating steroid secreted by the adrenal cortex, as well as estrone 3-sulfate and 17beta-estradiol 17-O-(beta-D-glucuronate). Mediates apical uptake of all-trans-retinol (atROL) across human retinal pigment epithelium, which is essential to maintaining the integrity of the visual cycle and thus vision. Involved in the uptake of clinically used drugs. Capable of thyroid hormone transport (both T3 or 3,3',5'-triiodo-L-thyronine, and T4 or L-tyroxine). Also transports prostaglandin E2. Plays roles in blood-brain and -cerebrospinal fluid barrier transport of organic anions and signal mediators, and in hormone uptake by neural cells. May also play a role in the reuptake of neuropeptides such as substance P/TAC1 and vasoactive intestinal peptide/VIP released from retinal neurons. May play an important role in plasma and tissue distribution of the structurally diverse chemotherapeutic drugs methotrexate and paclitaxel. Shows a pH-sensitive substrate specificity which may be ascribed to the protonation state of the binding site and leads to a stimulation of substrate transport in an acidic microenvironment. Hydrogencarbonate/HCO3(-) acts as the probable counteranion that exchanges for organic anions. May contribute to regulate the transport of organic compounds in testis across the blood-testis-barrier. In Homo sapiens (Human), this protein is Solute carrier organic anion transporter family member 1A2 (SLCO1A2).